Reading from the N-terminus, the 200-residue chain is Transcription elongation factor A protein-like 3 (200 aa).

Positions 1-19 (MEEVRGENEGKLEKEGKPE) are enriched in basic and acidic residues. A disordered region spans residues 1–200 (MEEVRGENEG…QRGLHDIPYL (200 aa)). Residues 20–34 (DEVEPEDEEKSDEDE) show a composition bias toward acidic residues. Serine 30 is modified (phosphoserine). 3 stretches are compositionally biased toward basic and acidic residues: residues 47–85 (GKPE…KPDS), 94–106 (RAAE…DYVP), and 114–153 (DRGT…EELR).

Belongs to the TFS-II family. TFA subfamily.

Its subcellular location is the nucleus. Its function is as follows. May be involved in transcriptional regulation. The chain is Transcription elongation factor A protein-like 3 (Tceal3) from Mus musculus (Mouse).